Here is a 451-residue protein sequence, read N- to C-terminus: Phosphoglucosamine mutase (451 aa).

The active-site Phosphoserine intermediate is Ser-107. 4 residues coordinate Mg(2+): Ser-107, Asp-246, Asp-248, and Asp-250. Position 107 is a phosphoserine (Ser-107).

This sequence belongs to the phosphohexose mutase family. The cofactor is Mg(2+). In terms of processing, activated by phosphorylation.

It catalyses the reaction alpha-D-glucosamine 1-phosphate = D-glucosamine 6-phosphate. Its function is as follows. Catalyzes the conversion of glucosamine-6-phosphate to glucosamine-1-phosphate. This is Phosphoglucosamine mutase from Burkholderia cenocepacia (strain ATCC BAA-245 / DSM 16553 / LMG 16656 / NCTC 13227 / J2315 / CF5610) (Burkholderia cepacia (strain J2315)).